A 63-amino-acid chain; its full sequence is Large ribosomal subunit protein bL32 (63 aa).

Residues 1 to 23 (MATPKAKVSKSRRDKRRAQFTAR) are disordered. Positions 7-18 (KVSKSRRDKRRA) are enriched in basic residues.

It belongs to the bacterial ribosomal protein bL32 family.

This Prosthecochloris aestuarii (strain DSM 271 / SK 413) protein is Large ribosomal subunit protein bL32.